Reading from the N-terminus, the 143-residue chain is MLQPKKTKFRKAFKGRIHGNAKGGTSLNFGSYGLKAMEPERITARQIEAARRAISRAIKRQGRLWIRIFPDVPVSSKPAEVRMGKGKGSPEYWAARVKPGRILFELDGVPGPVAALAFERAAMKLPIKTKVIARLGDTSHLEG.

Belongs to the universal ribosomal protein uL16 family. As to quaternary structure, part of the 50S ribosomal subunit.

Its function is as follows. Binds 23S rRNA and is also seen to make contacts with the A and possibly P site tRNAs. This chain is Large ribosomal subunit protein uL16, found in Sphingopyxis alaskensis (strain DSM 13593 / LMG 18877 / RB2256) (Sphingomonas alaskensis).